Consider the following 378-residue polypeptide: Beta-1,3-galactosyltransferase 4 (378 aa).

Residues 1–8 (MQLRLFRR) lie on the Cytoplasmic side of the membrane. The helical; Signal-anchor for type II membrane protein transmembrane segment at 9-19 (LLLAALLLVIV) threads the bilayer. The Lumenal segment spans residues 20–378 (WTLFGPSGLG…RCRAIAWLQS (359 aa)). N-linked (GlcNAc...) asparagine glycosylation occurs at N149.

Belongs to the glycosyltransferase 31 family. In terms of tissue distribution, highly expressed in heart, skeletal muscle and pancreas and, to a lesser extent, in brain, placenta, kidney, liver and lung.

It localises to the golgi apparatus membrane. The enzyme catalyses a ganglioside GM2 (d18:1(4E)) + UDP-alpha-D-galactose = a ganglioside GM1 (d18:1(4E)) + UDP + H(+). The catalysed reaction is a ganglioside GM2 + UDP-alpha-D-galactose = a ganglioside GM1 + UDP + H(+). It catalyses the reaction a ganglioside GD2 (d18:1(4E)) + UDP-alpha-D-galactose = a ganglioside GD1b (d18:1(4E)) + UDP + H(+). It carries out the reaction a ganglioside GA2 (d18:1(4E)) + UDP-alpha-D-galactose = a ganglioside GA1 (d18:1(4E)) + UDP + H(+). Its pathway is protein modification; protein glycosylation. Functionally, involved in GM1/GD1B/GA1 ganglioside biosynthesis. This is Beta-1,3-galactosyltransferase 4 from Homo sapiens (Human).